Reading from the N-terminus, the 1475-residue chain is MKRRELEKKLRKVRVTPQQDKYYTIGNLQWAIRMINLMGIKCVCDEECSAAEVALIITQFSALDLENSPIRGKEEVAIKNTLKVFWSLLAGYKPESTETALGYWEAFTYREREARADKEGEIKSIYPSLTQNTQNKKQTSNQTNTQSLPAITTQDGTPRFDPDLMKQLKIWSDATERNGVDLHAVNILGVITANLVQEEIKLLLNSTPKWRLDVQLIESKVREKENAHRTWKQHHPEAPKTDEIIGKGLSSAEQATLISVECRETFRQWVLQAAMEVAQAKHATPGPINIHQGPKEPYTDFINRLVAALEGMAAPETTKEYLLQHLSIDHANEDCQSILRPLGPNTPMEKKLEACRVVGSQKSKMQFLVAAMKEMGIQSPIPAVLPHTPEAYASQTSGPEDGRRCYGCGKTGHLKRNCKQQKCYHCGKPGHQARNCRSKNREVLLCPLWAEEPTTEQFSPEQHEFCDPICTPSYIRLDKQPFIKVFIGGRWVKGLVDTGADEVVLKNIHWDRIKGYPGTPIKQIGVNGVNVAKRKTHVEWRFKDKTGIIDVLFSDTPVNLFGRSLLRSIVTCFTLLVHTEKIEPLPVKVRGPGPKVPQWPLTKEKYQALKEIVKDLLAEGKISEAAWDNPYNTPVFVIKKKGTGRWRMLMDFRELNKITVKGQEFSTGLPYPPGIKECEHLTAIDIKDAYFTIPLHEDFRPFTAFSVVPVNREGPIERFQWNVLPQGWVCSPAIYQTTTQKIIENIKKSHPDVMLYQYMDDLLIGSNRDDHKQIVQEIRDKLGSYGFKTPDEKVQEERVKWIGFELTPKKWRFQPRQLKIKNPLTVNELQQLVGNCVWVQPEVKIPLYPLTDLLRDKTNLQEKIQLTPEAIKCVEEFNLKLKDPEWKDRIREGAELVIKIQMVPRGIVFDLLQDGNPIWGGVKGLNYDHSNKIKKILRTMNELNRTVVIMTGREASFLLPGSSEDWEAALQKEESLTQIFPVKFYRHSCRWTSICGPVRENLTTYYTDGGKKGKTAAAVYWCEGRTKSKVFPGTNQQAELKAICMALLDGPPKMNIITDSRYAYEGMREEPETWAREGIWLEIAKILPFKQYVGVGWVPAHKGIGGNTEADEGVKKALEQMAPCSPPEAILLKPGEKQNLETGIYMQGLRPQSFLPRADLPVAITGTMVDSELQLQLLNIGTEHIRIQKDEVFMTCFLENIPSATEDHERWHTSPDILVRQFHLPKRIAKEIVARCQECKRTTTSPVRGTNPRGRFLWQMDNTHWNKTIIWVAVETNSGLVEAQVIPEETALQVALCILQLIQRYTVLHLHSDNGPCFTAHRIENLCKYLGITKTTGIPYNPQSQGVVERAHRDLKDRLAAYQGDCETVEAALSLALVSLNKKRGGIGGHTPYEIYLESEHTKYQDQLEQQFSKQKIEKWCYVRNRRKEWKGPYKVLWDGDGAAVIEEEGKTALYPHRHMRFIPPPDSDIQDGSS.

The span at 130-147 shows a compositional bias: low complexity; the sequence is TQNTQNKKQTSNQTNTQS. A disordered region spans residues 130–159; that stretch reads TQNTQNKKQTSNQTNTQSLPAITTQDGTPR. CCHC-type zinc fingers lie at residues 403-420 and 421-438; these read RRCY…NCKQ and QKCY…NCRS. The region spanning 492 to 565 is the Peptidase A2 domain; sequence VKGLVDTGAD…TPVNLFGRSL (74 aa). Asp497 is a catalytic residue. The Reverse transcriptase domain maps to 619-806; the sequence is EGKISEAAWD…ERVKWIGFEL (188 aa). The region spanning 999 to 1119 is the RNase H type-1 domain; the sequence is RENLTTYYTD…ADEGVKKALE (121 aa). An Integrase-type zinc finger spans residues 1199–1240; sequence ENIPSATEDHERWHTSPDILVRQFHLPKRIAKEIVARCQECK. Zn(2+)-binding residues include His1208, His1212, Cys1236, and Cys1239. Residues 1248 to 1400 form the Integrase catalytic domain; sequence RGTNPRGRFL…TPYEIYLESE (153 aa). The segment at residues 1419-1465 is a DNA-binding region (integrase-type); that stretch reads KWCYVRNRRKEWKGPYKVLWDGDGAAVIEEEGKTALYPHRHMRFIPP.

In terms of assembly, interacts with host light chain cytoplasmic dynein DYNLL1; this interaction is critical for intracellular microtubule-dependent viral genome transport. Specific enzymatic cleavages by the viral protease yield mature proteins. The protease is released by autocatalytic cleavage. The polyprotein is cleaved during and after budding, this process is termed maturation.

Its subcellular location is the virion. It catalyses the reaction DNA(n) + a 2'-deoxyribonucleoside 5'-triphosphate = DNA(n+1) + diphosphate. The enzyme catalyses Endohydrolysis of RNA in RNA/DNA hybrids. Three different cleavage modes: 1. sequence-specific internal cleavage of RNA. Human immunodeficiency virus type 1 and Moloney murine leukemia virus enzymes prefer to cleave the RNA strand one nucleotide away from the RNA-DNA junction. 2. RNA 5'-end directed cleavage 13-19 nucleotides from the RNA end. 3. DNA 3'-end directed cleavage 15-20 nucleotides away from the primer terminus.. It carries out the reaction 3'-end directed exonucleolytic cleavage of viral RNA-DNA hybrid.. Matrix protein p16 forms the outer shell of the core of the virus, lining the inner surface of the viral membrane. Functionally, capsid protein p26 forms the conical core of the virus that encapsulates the genomic RNA-nucleocapsid complex. Interaction between incoming particle-associated Gag proteins and host dynein allows intracellular microtubule-dependent virus transport toward the perinuclear region, prior to nucleus translocation and integration into host genome. In terms of biological role, the aspartyl protease mediates proteolytic cleavages of Gag and Gag-Pol polyproteins during or shortly after the release of the virion from the plasma membrane. Cleavages take place as an ordered, step-wise cascade to yield mature proteins. This process is called maturation. Displays maximal activity during the budding process just prior to particle release from the cell. Its function is as follows. Reverse transcriptase/ribonuclease H (RT) is a multifunctional enzyme that converts the viral RNA genome into dsDNA in the cytoplasm, shortly after virus entry into the cell. This enzyme displays a DNA polymerase activity that can copy either DNA or RNA templates, and a ribonuclease H (RNase H) activity that cleaves the RNA strand of RNA-DNA heteroduplexes in a partially processive 3' to 5' endonucleasic mode. Conversion of viral genomic RNA into dsDNA requires many steps. A tRNA binds to the primer-binding site (PBS) situated at the 5'-end of the viral RNA. RT uses the 3' end of the tRNA primer to perform a short round of RNA-dependent minus-strand DNA synthesis. The reading proceeds through the U5 region and ends after the repeated (R) region which is present at both ends of viral RNA. The portion of the RNA-DNA heteroduplex is digested by the RNase H, resulting in a ssDNA product attached to the tRNA primer. This ssDNA/tRNA hybridizes with the identical R region situated at the 3' end of viral RNA. This template exchange, known as minus-strand DNA strong stop transfer, can be either intra- or intermolecular. RT uses the 3' end of this newly synthesized short ssDNA to perform the RNA-dependent minus-strand DNA synthesis of the whole template. RNase H digests the RNA template except for a polypurine tract (PPT) situated at the 5'-end of the genome. It is not clear if both polymerase and RNase H activities are simultaneous. RNase H probably can proceed both in a polymerase-dependent (RNA cut into small fragments by the same RT performing DNA synthesis) and a polymerase-independent mode (cleavage of remaining RNA fragments by free RTs). Secondly, RT performs DNA-directed plus-strand DNA synthesis using the PPT that has not been removed by RNase H as primer. PPT and tRNA primers are then removed by RNase H. The 3' and 5' ssDNA PBS regions hybridize to form a circular dsDNA intermediate. Strand displacement synthesis by RT to the PBS and PPT ends produces a blunt ended, linear dsDNA copy of the viral genome that includes long terminal repeats (LTRs) at both ends. Integrase catalyzes viral DNA integration into the host chromosome, by performing a series of DNA cutting and joining reactions. This enzyme activity takes place after virion entry into a cell and reverse transcription of the RNA genome in dsDNA. In Bovine immunodeficiency virus (strain R29) (BIV), this protein is Gag-Pol polyprotein (gag-pol).